A 667-amino-acid chain; its full sequence is Serine/threonine-protein kinase BUR1 (667 aa).

In terms of domain architecture, Protein kinase spans 60–378; sequence YKEEEKLGQG…AMSAMKHPFF (319 aa). ATP-binding positions include 66–74 and Lys89; that span reads LGQGTFGEV. The active-site Proton acceptor is the Asp207. Positions 408–667 are disordered; sequence HEAMSQKGPS…SEQKDIADLY (260 aa). Over residues 432 to 443 the composition is skewed to basic and acidic residues; the sequence is KFEKKSGIKREQ. Residues 494–516 are compositionally biased toward polar residues; the sequence is NNHSGSLRNRITPSNMGTHSNPR. The segment covering 541 to 556 has biased composition (low complexity); sequence YNRGYSSSVNSRYNNR. Polar residues-rich tracts occupy residues 582–594, 602–611, and 622–632; these read DNNQ…QGHS, SKYNSTQTNI, and NEYNASKLGSQ. A compositionally biased stretch (basic and acidic residues) spans 633–667; the sequence is DTKKNDYPKHSETQKQQNNEEKKIHSEQKDIADLY.

It belongs to the protein kinase superfamily. CMGC Ser/Thr protein kinase family. CDC2/CDKX subfamily.

The protein localises to the nucleus. It carries out the reaction L-seryl-[protein] + ATP = O-phospho-L-seryl-[protein] + ADP + H(+). The enzyme catalyses L-threonyl-[protein] + ATP = O-phospho-L-threonyl-[protein] + ADP + H(+). It catalyses the reaction [DNA-directed RNA polymerase] + ATP = phospho-[DNA-directed RNA polymerase] + ADP + H(+). Functionally, serine/threonine-protein kinase involved in transcription regulation. Phosphorylates the UBC2/RAD6 ubiquitin-conjugating enzyme (E2), leading to monoubiquitination of histone H2B and the silencing of telomeric-associated genes. Also required for histone H3 methylation. Necessary for the recovery from pheromone-induced growth arrest in the cell cycle G1 phase. In Candida glabrata (strain ATCC 2001 / BCRC 20586 / JCM 3761 / NBRC 0622 / NRRL Y-65 / CBS 138) (Yeast), this protein is Serine/threonine-protein kinase BUR1 (BUR1).